We begin with the raw amino-acid sequence, 423 residues long: D-tagatose-1,6-bisphosphate aldolase subunit GatZ (423 aa).

It belongs to the GatZ/KbaZ family. GatZ subfamily. As to quaternary structure, forms a complex with GatY.

It participates in carbohydrate metabolism; D-tagatose 6-phosphate degradation; D-glyceraldehyde 3-phosphate and glycerone phosphate from D-tagatose 6-phosphate: step 2/2. Component of the tagatose-1,6-bisphosphate aldolase GatYZ that is required for full activity and stability of the Y subunit. Could have a chaperone-like function for the proper and stable folding of GatY. When expressed alone, GatZ does not show any aldolase activity. Is involved in the catabolism of galactitol. This Salmonella typhimurium (strain LT2 / SGSC1412 / ATCC 700720) protein is D-tagatose-1,6-bisphosphate aldolase subunit GatZ.